A 197-amino-acid chain; its full sequence is uncharacterized protein (197 aa).

This is an uncharacterized protein from Methanocaldococcus jannaschii (strain ATCC 43067 / DSM 2661 / JAL-1 / JCM 10045 / NBRC 100440) (Methanococcus jannaschii).